The chain runs to 202 residues: tRNA (pseudouridine(54)-N(1))-methyltransferase (202 aa).

Positions 130, 152, and 185 each coordinate S-adenosyl-L-methionine.

This sequence belongs to the methyltransferase superfamily. TrmY family. As to quaternary structure, homodimer.

It localises to the cytoplasm. It carries out the reaction pseudouridine(54) in tRNA + S-adenosyl-L-methionine = N(1)-methylpseudouridine(54) in tRNA + S-adenosyl-L-homocysteine + H(+). Specifically catalyzes the N1-methylation of pseudouridine at position 54 (Psi54) in tRNAs. The polypeptide is tRNA (pseudouridine(54)-N(1))-methyltransferase (Methanococcoides burtonii (strain DSM 6242 / NBRC 107633 / OCM 468 / ACE-M)).